Reading from the N-terminus, the 527-residue chain is Probable malate:quinone oxidoreductase (527 aa).

This sequence belongs to the MQO family. FAD serves as cofactor.

The catalysed reaction is (S)-malate + a quinone = a quinol + oxaloacetate. The protein operates within carbohydrate metabolism; tricarboxylic acid cycle; oxaloacetate from (S)-malate (quinone route): step 1/1. This Pectobacterium atrosepticum (strain SCRI 1043 / ATCC BAA-672) (Erwinia carotovora subsp. atroseptica) protein is Probable malate:quinone oxidoreductase.